The primary structure comprises 261 residues: Small ribosomal subunit protein eS1B (261 aa).

Residues Met1–Lys18 show a composition bias toward basic residues. The segment at Met1–Thr23 is disordered.

This sequence belongs to the eukaryotic ribosomal protein eS1 family. Component of the small ribosomal subunit. Mature ribosomes consist of a small (40S) and a large (60S) subunit. The 40S subunit contains about 33 different proteins and 1 molecule of RNA (18S). The 60S subunit contains about 49 different proteins and 3 molecules of RNA (25S, 5.8S and 5S).

It localises to the cytoplasm. The chain is Small ribosomal subunit protein eS1B from Trypanosoma cruzi (strain CL Brener).